Here is a 62-residue protein sequence, read N- to C-terminus: MLKDIQIYELNERIKKKKLKTYNRNKLLKLLTYVERHKICIVLYFNLIKRQLIYIEFVFIRN.

The protein resides in the plastid. Its subcellular location is the chloroplast. This is an uncharacterized protein from Guillardia theta (Cryptophyte).